The chain runs to 278 residues: Hydroxyethylthiazole kinase (278 aa).

Residue Met-48 participates in substrate binding. Residues Arg-124 and Thr-175 each coordinate ATP. Gly-202 is a binding site for substrate.

The protein belongs to the Thz kinase family. Mg(2+) is required as a cofactor.

It catalyses the reaction 5-(2-hydroxyethyl)-4-methylthiazole + ATP = 4-methyl-5-(2-phosphooxyethyl)-thiazole + ADP + H(+). The protein operates within cofactor biosynthesis; thiamine diphosphate biosynthesis; 4-methyl-5-(2-phosphoethyl)-thiazole from 5-(2-hydroxyethyl)-4-methylthiazole: step 1/1. In terms of biological role, catalyzes the phosphorylation of the hydroxyl group of 4-methyl-5-beta-hydroxyethylthiazole (THZ). This is Hydroxyethylthiazole kinase from Clostridium botulinum (strain Eklund 17B / Type B).